The sequence spans 201 residues: Ras-related protein Rab-9B (201 aa).

GTP-binding residues include V18, G19, K20, S21, S22, D33, S34, A36, H38, and T39. Mg(2+) is bound at residue S21. The Switch 1 motif lies at 31–42; the sequence is KFDSQAFHTIGV. S34 carries the post-translational modification Phosphoserine. Residues T39 and D62 each coordinate Mg(2+). The short motif at 64–78 is the Switch 2 element; the sequence is AGQERFKSLRTPFYR. Positions 65, 124, 125, 155, and 156 each coordinate GTP. S-geranylgeranyl cysteine attachment occurs at residues C200 and C201.

The protein belongs to the small GTPase superfamily. Rab family. Interacts (GTP-bound form) with SGSM1; the GDP-bound form has much lower affinity for SGSM1. The GTP-bound form but not the GDP-bound form interacts with HPS4 and the BLOC-3 complex (heterodimer of HPS1 and HPS4) but does not interact with HPS1 alone. Interacts (GTP-bound form) with NDE1. It depends on Mg(2+) as a cofactor.

The protein resides in the cell membrane. It localises to the cytoplasmic vesicle. The protein localises to the phagosome membrane. It catalyses the reaction GTP + H2O = GDP + phosphate + H(+). With respect to regulation, regulated by guanine nucleotide exchange factors (GEFs) which promote the exchange of bound GDP for free GTP. Regulated by GTPase activating proteins (GAPs) which increase the GTP hydrolysis activity. Inhibited by GDP dissociation inhibitors (GDIs). Its function is as follows. The small GTPases Rab are key regulators of intracellular membrane trafficking, from the formation of transport vesicles to their fusion with membranes. Rabs cycle between an inactive GDP-bound form and an active GTP-bound form that is able to recruit to membranes different sets of downstream effectors directly responsible for vesicle formation, movement, tethering and fusion. RAB9B is involved in the transport of proteins between the endosomes and the trans Golgi network. May use NDE1/NDEL1 as an effector to interact with the dynein motor complex in order to control retrograde trafficking of RAB9-associated late endosomes to the TGN. The sequence is that of Ras-related protein Rab-9B from Mus musculus (Mouse).